The sequence spans 565 residues: Sulfite reductase [NADPH] hemoprotein beta-component (565 aa).

[4Fe-4S] cluster contacts are provided by Cys429, Cys435, Cys474, and Cys478. Cys478 provides a ligand contact to siroheme.

It belongs to the nitrite and sulfite reductase 4Fe-4S domain family. Alpha(8)-beta(8). The alpha component is a flavoprotein, the beta component is a hemoprotein. The cofactor is siroheme. It depends on [4Fe-4S] cluster as a cofactor.

It carries out the reaction hydrogen sulfide + 3 NADP(+) + 3 H2O = sulfite + 3 NADPH + 4 H(+). Its pathway is sulfur metabolism; hydrogen sulfide biosynthesis; hydrogen sulfide from sulfite (NADPH route): step 1/1. In terms of biological role, component of the sulfite reductase complex that catalyzes the 6-electron reduction of sulfite to sulfide. This is one of several activities required for the biosynthesis of L-cysteine from sulfate. In Shewanella piezotolerans (strain WP3 / JCM 13877), this protein is Sulfite reductase [NADPH] hemoprotein beta-component.